The sequence spans 340 residues: N-acetyl-gamma-glutamyl-phosphate reductase (340 aa).

Cys-149 is an active-site residue.

This sequence belongs to the NAGSA dehydrogenase family. Type 1 subfamily.

Its subcellular location is the cytoplasm. It catalyses the reaction N-acetyl-L-glutamate 5-semialdehyde + phosphate + NADP(+) = N-acetyl-L-glutamyl 5-phosphate + NADPH + H(+). The protein operates within amino-acid biosynthesis; L-arginine biosynthesis; N(2)-acetyl-L-ornithine from L-glutamate: step 3/4. In terms of biological role, catalyzes the NADPH-dependent reduction of N-acetyl-5-glutamyl phosphate to yield N-acetyl-L-glutamate 5-semialdehyde. This chain is N-acetyl-gamma-glutamyl-phosphate reductase, found in Ruthia magnifica subsp. Calyptogena magnifica.